The following is a 72-amino-acid chain: Conotoxin VnMKLT2-011 (72 aa).

The N-terminal stretch at 1-23 (MMKLTCVLIIAVLFLTACQLTTA) is a signal peptide. Positions 24 to 42 (ETRDEYRAVRSSDEVRNSR) are excised as a propeptide. 3 cysteine pairs are disulfide-bonded: Cys44-Cys57, Cys51-Cys62, and Cys56-Cys71.

Belongs to the conotoxin O1 superfamily. Expressed by the venom duct.

It localises to the secreted. In Conus ventricosus (Mediterranean cone), this protein is Conotoxin VnMKLT2-011.